The primary structure comprises 2971 residues: Reticulocyte-binding protein homolog 1 (2971 aa).

An N-terminal signal peptide occupies residues 1–20 (MQRWIFCNIVLHILIYLAEF). Topologically, residues 21–2897 (SHEQESYSSN…KKQKNGNHER (2877 aa)) are extracellular. Residues 30 to 50 (NEKIRKDYSDDNNYEPTPSYE) are disordered. Residues Asn70, Asn78, Asn87, Asn135, Asn286, Asn384, and Asn417 are each glycosylated (N-linked (GlcNAc...) asparagine). Residues 500–833 (LQIVQQKLLE…MQQGYNNLTN (334 aa)) form an erythrocyte binding domain (EBD) region. LRR repeat units follow at residues 528 to 553 (YKNI…NIKD) and 607 to 633 (LNNL…ILQK). An N-linked (GlcNAc...) asparagine glycan is attached at Asn685. LRR repeat units follow at residues 736–758 (IDTI…VYTD) and 785–808 (QETL…LLKE). Asn830, Asn892, Asn1000, and Asn1010 each carry an N-linked (GlcNAc...) asparagine glycan. LRR repeat units follow at residues 993–1018 (LKIL…TLND) and 1356–1381 (LRNI…AHKE). N-linked (GlcNAc...) asparagine glycosylation is present at Asn1425. Residues 1466-1489 (AKYMENIDTYKNNIEIISKQINPE) form an LRR 7 repeat. Residue Asn1496 is glycosylated (N-linked (GlcNAc...) asparagine). LRR repeat units follow at residues 1512-1537 (YKQI…ELQN), 1586-1609 (SQNI…LEEE), and 1611-1636 (EQMK…AFIN). 5 N-linked (GlcNAc...) asparagine glycosylation sites follow: Asn1664, Asn1692, Asn1718, Asn1816, and Asn1844. 2 LRR repeats span residues 1700-1723 (LQEL…TIKY) and 1809-1834 (LKLF…SIQN). An LRR 13 repeat occupies 1880–1903 (QNEIRNMNLEKNFMLDKSKKIDEE). Asn1913 and Asn1918 each carry an N-linked (GlcNAc...) asparagine glycan. The stretch at 1944-1967 (KENIEKIKQEINTLSDVFKKPFFF) is one LRR 14 repeat. Asn2054, Asn2207, Asn2289, Asn2300, Asn2338, and Asn2405 each carry an N-linked (GlcNAc...) asparagine glycan. An LRR 15 repeat occupies 2523-2548 (IKDIDNVFIKIQNNKFEQIQKYIEII). N-linked (GlcNAc...) asparagine glycosylation is found at Asn2598 and Asn2752. One copy of the LRR 16 repeat lies at 2731 to 2754 (ENIFDNIQLKKKDIDDIIININNT). Basic and acidic residues-rich tracts occupy residues 2773–2782 (KVDEKSEINN) and 2795–2804 (QKNKIKDHNL). 2 disordered regions span residues 2773–2825 (KVDE…MKEQ) and 2840–2862 (HHVH…LQEQ). Asn2811 carries N-linked (GlcNAc...) asparagine glycosylation. Over residues 2814 to 2825 (EESHQNEQMKEQ) the composition is skewed to basic and acidic residues. A helical membrane pass occupies residues 2898–2918 (MYFASGIVVSILFLSSLGFVI). Residues 2919 to 2971 (NSKNNKQEYDKEQEKQQQNDFVCDNNKMDDKSTQKYGRNQEEVMEISFDNDYI) are Cytoplasmic-facing.

May in part interact with AMA1 in the moving tight junction between the parasite and the erythrocyte membranes; the interaction may facilitate junction formation and active invasion. Post-translationally, proteolytically processed into multiple fragments following schizont rupture. In the mature schizont stage prior to merozoite release, full length RH1 is processed post-Golgi into a 240 kDa N-terminal form and a 120 kDa C-terminal form containing the transmembrane region. Both forms appear not to form a complex. However, they appear to remain in close proximity in late schizonts. Following merozoite invasion of host erythrocytes, the 240 kDa form is further processed into a 140 kDa form which may be involved in the disengagement of the ligand-receptor complex required during the invasion process. Also, the 120 kDa is further cleaved into a 110 kDa form and a transmembrane 9 kDa form probably by ROM4.

It localises to the cell membrane. It is found in the secreted. The protein resides in the cell junction. The protein localises to the tight junction. Its subcellular location is the cytoplasmic vesicle. It localises to the secretory vesicle. It is found in the rhoptry. In terms of biological role, during the asexual blood stage, binds to a sialic acid containing receptor on the surface of the host erythrocyte and thus is involved in merozoite invasion. Binds erythrocytes via a neuraminidase sensitive and trypsin-, chymotrypsin-resistant receptor. After merozoite attachment and reorientation, RH1 binding to its erythrocyte receptor triggers an increase in intracellular Ca(2+) within the parasite resulting in the release of microneme proteins such as EBA175 which in turn leads to the formation of the tight junction between parasite and host cell. The polypeptide is Reticulocyte-binding protein homolog 1 (Plasmodium falciparum (isolate 3D7)).